A 127-amino-acid polypeptide reads, in one-letter code: MAKTNKKKRIRRNVSNGVAHVHATFNNTTVTITDAKGDTLCWASAGTSGFKGSRKSTPFAGQCAAQQAAEKATKFGMRDVEVRVKGPGSGRESAITALQAAGLNVKLIEEVTPIPHNGCRPRKKRRV.

Belongs to the universal ribosomal protein uS11 family. In terms of assembly, part of the 30S ribosomal subunit. Interacts with proteins S7 and S18. Binds to IF-3.

In terms of biological role, located on the platform of the 30S subunit, it bridges several disparate RNA helices of the 16S rRNA. Forms part of the Shine-Dalgarno cleft in the 70S ribosome. This chain is Small ribosomal subunit protein uS11, found in Rhodopirellula baltica (strain DSM 10527 / NCIMB 13988 / SH1).